The chain runs to 410 residues: Mating-type locus allele B7 protein (410 aa).

A variable domain between B alleles region spans residues 1 to 110; that stretch reads MSSDPNFSLT…VNVGSPAVGC (110 aa). The segment at residues 107 to 184 is a DNA-binding region (homeobox; TALE-type); that stretch reads AVGCRNLSED…NARRRSGWSH (78 aa). Positions 111-410 are highly conserved between B alleles; sequence RNLSEDLPAY…PFLCLSVAFV (300 aa). Disordered regions lie at residues 202–225, 278–336, and 374–394; these read RAKL…SNNL, TPKP…PELS, and ARGN…QPDE. The Nuclear localization signal signature appears at 276-308; that stretch reads KKTPKPGMPRPVTTVAKRQPARKTKPAAKPNSR. Positions 306–336 are enriched in polar residues; the sequence is NSRTANPRASTTPSIDSTLDSSKLESTPELS. Residues 333–410 are not essential for B7 function; that stretch reads PELSMCSTAD…PFLCLSVAFV (78 aa). A compositionally biased stretch (basic residues) spans 375-388; that stretch reads RGNRKVKALPKRAG.

It belongs to the TALE/M-ATYP homeobox family.

The protein resides in the nucleus. The B locus has at least 25 alleles, and any combination of two different B alleles yields a multimeric regulatory protein, that activates genes responsible for the pathogenicity and for the sexual development of the fungus within the corn plant. This Mycosarcoma maydis (Corn smut fungus) protein is Mating-type locus allele B7 protein.